The following is a 90-amino-acid chain: MTRTVMCRKYKEELPGLERAPYPGAKGEDIFNHVSQKAWADWQKHQTLLINERRLNMMNAEDRKFLQTEMDKFLSGEEYAQAEGYVPPEK.

The protein belongs to the Fe(2+)-trafficking protein family.

In terms of biological role, could be a mediator in iron transactions between iron acquisition and iron-requiring processes, such as synthesis and/or repair of Fe-S clusters in biosynthetic enzymes. This chain is Probable Fe(2+)-trafficking protein, found in Pseudomonas syringae pv. tomato (strain ATCC BAA-871 / DC3000).